A 274-amino-acid chain; its full sequence is ATP synthase subunit a (274 aa).

5 helical membrane passes run 44 to 64, 110 to 130, 142 to 164, 212 to 232, and 243 to 263; these read VDSM…FYMV, FIWV…FPFI, IVPS…LILF, LFGN…LLPW, and AIFH…LTIV.

It belongs to the ATPase A chain family. In terms of assembly, F-type ATPases have 2 components, CF(1) - the catalytic core - and CF(0) - the membrane proton channel. CF(1) has five subunits: alpha(3), beta(3), gamma(1), delta(1), epsilon(1). CF(0) has three main subunits: a(1), b(2) and c(9-12). The alpha and beta chains form an alternating ring which encloses part of the gamma chain. CF(1) is attached to CF(0) by a central stalk formed by the gamma and epsilon chains, while a peripheral stalk is formed by the delta and b chains.

It localises to the cell membrane. Its function is as follows. Key component of the proton channel; it plays a direct role in the translocation of protons across the membrane. This Buchnera aphidicola subsp. Acyrthosiphon pisum (strain APS) (Acyrthosiphon pisum symbiotic bacterium) protein is ATP synthase subunit a.